We begin with the raw amino-acid sequence, 421 residues long: Signal recognition particle receptor FtsY (421 aa).

Residues 228–235, 309–313, and 373–376 each bind GTP; these read GINGAGKT, DTAGR, and TKLD.

It belongs to the GTP-binding SRP family. FtsY subfamily. Part of the signal recognition particle protein translocation system, which is composed of SRP and FtsY. SRP is a ribonucleoprotein composed of Ffh and a 4.5S RNA molecule.

The protein resides in the cell inner membrane. Its subcellular location is the cytoplasm. The enzyme catalyses GTP + H2O = GDP + phosphate + H(+). In terms of biological role, involved in targeting and insertion of nascent membrane proteins into the cytoplasmic membrane. Acts as a receptor for the complex formed by the signal recognition particle (SRP) and the ribosome-nascent chain (RNC). Interaction with SRP-RNC leads to the transfer of the RNC complex to the Sec translocase for insertion into the membrane, the hydrolysis of GTP by both Ffh and FtsY, and the dissociation of the SRP-FtsY complex into the individual components. The protein is Signal recognition particle receptor FtsY of Neisseria meningitidis serogroup B (strain ATCC BAA-335 / MC58).